We begin with the raw amino-acid sequence, 593 residues long: Uroporphyrinogen-III C-methyltransferase (593 aa).

The disordered stretch occupies residues 278-303 (ETSSSPNKKTKQETVTEGVVPPTDEN).

This sequence belongs to the precorrin methyltransferase family.

The catalysed reaction is uroporphyrinogen III + 2 S-adenosyl-L-methionine = precorrin-2 + 2 S-adenosyl-L-homocysteine + H(+). In terms of biological role, siroheme synthase involved in methionine biosynthesis. This Saccharomyces cerevisiae (strain ATCC 204508 / S288c) (Baker's yeast) protein is Uroporphyrinogen-III C-methyltransferase.